Reading from the N-terminus, the 485-residue chain is Mitochondrial metalloendopeptidase OMA1 (485 aa).

The N-terminal 16 residues, 1 to 16 (MKPSLKRRLLLLSRKF), are a transit peptide targeting the mitochondrion. At 17–147 (AKASIRKLLR…GPGRWFQNPR (131 aa)) the chain is on the mitochondrial matrix side. The helical transmembrane segment at 148–168 (TVFTVVLVGSVGLITLIVGNT) threads the bilayer. The Mitochondrial intermembrane portion of the chain corresponds to 169-485 (ETIPYTKRTH…AGRTGVEGFL (317 aa)). His352 serves as a coordination point for Zn(2+). Residue Glu353 is part of the active site. Zn(2+) is bound by residues His356 and Glu405. The interval 456–485 (KLLAQANVMEEALMIYREVQAGRTGVEGFL) is required for protease activation.

This sequence belongs to the peptidase M48A family. In terms of assembly, homooligomer. Zn(2+) serves as cofactor.

The protein resides in the mitochondrion inner membrane. In terms of biological role, protease that is part of the quality control system in the inner membrane of mitochondria. Metalloendopeptidase that modulates the oxidative phosphorylation (OXPHOS) system and plant growth. Involved in tolerance mechanisms to heat, osmotic and oxidative stresses. The sequence is that of Mitochondrial metalloendopeptidase OMA1 from Arabidopsis thaliana (Mouse-ear cress).